The sequence spans 565 residues: Formate--tetrahydrofolate ligase (565 aa).

65–72 (TPAGEGKT) provides a ligand contact to ATP.

It belongs to the formate--tetrahydrofolate ligase family.

The enzyme catalyses (6S)-5,6,7,8-tetrahydrofolate + formate + ATP = (6R)-10-formyltetrahydrofolate + ADP + phosphate. It functions in the pathway one-carbon metabolism; tetrahydrofolate interconversion. The protein is Formate--tetrahydrofolate ligase of Syntrophus aciditrophicus (strain SB).